The sequence spans 210 residues: ER membrane protein complex subunit 8 (210 aa).

The MPN domain occupies V4–R150.

The protein belongs to the EMC8/EMC9 family. In terms of assembly, component of the ER membrane protein complex (EMC). EMC8 and EMC9 are mutually exclusive subunits of the EMC complex. Expressed in liver, pancreas, heart, lung, kidney, brain, skeletal muscle, and placenta. Expression levels are highest in pancreas and moderate in heart, skeletal muscle, and placenta.

Its subcellular location is the endoplasmic reticulum membrane. Part of the endoplasmic reticulum membrane protein complex (EMC) that enables the energy-independent insertion into endoplasmic reticulum membranes of newly synthesized membrane proteins. Preferentially accommodates proteins with transmembrane domains that are weakly hydrophobic or contain destabilizing features such as charged and aromatic residues. Involved in the cotranslational insertion of multi-pass membrane proteins in which stop-transfer membrane-anchor sequences become ER membrane spanning helices. It is also required for the post-translational insertion of tail-anchored/TA proteins in endoplasmic reticulum membranes. By mediating the proper cotranslational insertion of N-terminal transmembrane domains in an N-exo topology, with translocated N-terminus in the lumen of the ER, controls the topology of multi-pass membrane proteins like the G protein-coupled receptors. By regulating the insertion of various proteins in membranes, it is indirectly involved in many cellular processes. This is ER membrane protein complex subunit 8 (EMC8) from Homo sapiens (Human).